We begin with the raw amino-acid sequence, 65 residues long: Small ribosomal subunit protein bS21 (65 aa).

It belongs to the bacterial ribosomal protein bS21 family.

The chain is Small ribosomal subunit protein bS21 from Cytophaga hutchinsonii (strain ATCC 33406 / DSM 1761 / CIP 103989 / NBRC 15051 / NCIMB 9469 / D465).